A 209-amino-acid polypeptide reads, in one-letter code: Small ribosomal subunit protein uS4 (209 aa).

The S4 RNA-binding domain maps to 98–164 (RRLDNVVYRL…LPIKNAIELN (67 aa)).

It belongs to the universal ribosomal protein uS4 family. As to quaternary structure, part of the 30S ribosomal subunit. Contacts protein S5. The interaction surface between S4 and S5 is involved in control of translational fidelity.

In terms of biological role, one of the primary rRNA binding proteins, it binds directly to 16S rRNA where it nucleates assembly of the body of the 30S subunit. Functionally, with S5 and S12 plays an important role in translational accuracy. The protein is Small ribosomal subunit protein uS4 of Thermosipho melanesiensis (strain DSM 12029 / CIP 104789 / BI429).